We begin with the raw amino-acid sequence, 405 residues long: L-carnitine CoA-transferase (405 aa).

CoA is bound by residues K97 and R104. The active-site Nucleophile is D169.

Belongs to the CoA-transferase III family. CaiB subfamily. In terms of assembly, homodimer.

Its subcellular location is the cytoplasm. It catalyses the reaction crotonobetainyl-CoA + (R)-carnitine = crotonobetaine + (R)-carnitinyl-CoA. The enzyme catalyses 4-(trimethylamino)butanoyl-CoA + (R)-carnitine = (R)-carnitinyl-CoA + 4-(trimethylamino)butanoate. It functions in the pathway amine and polyamine metabolism; carnitine metabolism. In terms of biological role, catalyzes the reversible transfer of the CoA moiety from gamma-butyrobetainyl-CoA to L-carnitine to generate L-carnitinyl-CoA and gamma-butyrobetaine. Is also able to catalyze the reversible transfer of the CoA moiety from gamma-butyrobetainyl-CoA or L-carnitinyl-CoA to crotonobetaine to generate crotonobetainyl-CoA. This is L-carnitine CoA-transferase (caiB) from Escherichia coli O157:H7.